The sequence spans 391 residues: ATP phosphoribosyltransferase regulatory subunit (391 aa).

It belongs to the class-II aminoacyl-tRNA synthetase family. HisZ subfamily. As to quaternary structure, heteromultimer composed of HisG and HisZ subunits.

The protein resides in the cytoplasm. Its pathway is amino-acid biosynthesis; L-histidine biosynthesis; L-histidine from 5-phospho-alpha-D-ribose 1-diphosphate: step 1/9. Functionally, required for the first step of histidine biosynthesis. May allow the feedback regulation of ATP phosphoribosyltransferase activity by histidine. The sequence is that of ATP phosphoribosyltransferase regulatory subunit from Nitrosomonas europaea (strain ATCC 19718 / CIP 103999 / KCTC 2705 / NBRC 14298).